The chain runs to 474 residues: GTPase Der (474 aa).

EngA-type G domains lie at 3-167 and 204-379; these read LTIA…GSER and IRIA…RVWN. Residues 9–16, 56–60, 119–122, 210–217, 257–261, and 322–325 each bind GTP; these read GRPNVGKS, DTAGL, NKSE, GRPNTGKS, and NKWD. The region spanning 380–464 is the KH-like domain; sequence RRISTAKLNQ…PVRLSLRASD (85 aa).

The protein belongs to the TRAFAC class TrmE-Era-EngA-EngB-Septin-like GTPase superfamily. EngA (Der) GTPase family. Associates with the 50S ribosomal subunit.

GTPase that plays an essential role in the late steps of ribosome biogenesis. The sequence is that of GTPase Der from Bartonella tribocorum (strain CIP 105476 / IBS 506).